Here is a 426-residue protein sequence, read N- to C-terminus: Gamma-glutamyl phosphate reductase (426 aa).

The protein belongs to the gamma-glutamyl phosphate reductase family.

The protein resides in the cytoplasm. The enzyme catalyses L-glutamate 5-semialdehyde + phosphate + NADP(+) = L-glutamyl 5-phosphate + NADPH + H(+). It participates in amino-acid biosynthesis; L-proline biosynthesis; L-glutamate 5-semialdehyde from L-glutamate: step 2/2. Functionally, catalyzes the NADPH-dependent reduction of L-glutamate 5-phosphate into L-glutamate 5-semialdehyde and phosphate. The product spontaneously undergoes cyclization to form 1-pyrroline-5-carboxylate. In Delftia acidovorans (strain DSM 14801 / SPH-1), this protein is Gamma-glutamyl phosphate reductase.